We begin with the raw amino-acid sequence, 359 residues long: MILNSSTEDGIKRIQDDCPKAGRHNYIFVMIPTLYSIIFVVGIFGNSLVVIVIYFYMKLKTVASVFLLNLALADLCFLLTLPLWAVYTAMEYRWPFGNYLCKIASASVSFNLYASVFLLTCLSIDRYLAIVHPMKSRLRRTMLVAKVTCIIIWLLAGLASLPAIIHRNVFFIENTNITVCAFHYESQNSTLPIGLGLTKNILGFLFPFLIILTSYTLIWKALKKAYEIQKNKPRNDDIFKIIMAIVLFFFFSWIPHQIFTFLDVLIQLGIIRDCRIADIVDTAMPITICIAYFNNCLNPLFYGFLGKKFKKYFLQLLKYIPPKAKSHSNLSTKMSTLSYRPSDNVSSSTKKPAPCFEVE.

Topologically, residues 1 to 25 (MILNSSTEDGIKRIQDDCPKAGRHN) are extracellular. N4 is a glycosylation site (N-linked (GlcNAc...) asparagine). The angiotensin II site is built by Q15 and D17. 2 cysteine pairs are disulfide-bonded: C18–C274 and C101–C180. Residues 26-55 (YIFVMIPTLYSIIFVVGIFGNSLVVIVIYF) traverse the membrane as a helical segment. The Cytoplasmic portion of the chain corresponds to 56-61 (YMKLKT). The helical transmembrane segment at 62 to 89 (VASVFLLNLALADLCFLLTLPLWAVYTA) threads the bilayer. At 90–98 (MEYRWPFGN) the chain is on the extracellular side. A helical transmembrane segment spans residues 99–125 (YLCKIASASVSFNLYASVFLLTCLSID). Residues 126-141 (RYLAIVHPMKSRLRRT) are Cytoplasmic-facing. A helical membrane pass occupies residues 142 to 165 (MLVAKVTCIIIWLLAGLASLPAII). Topologically, residues 166–190 (HRNVFFIENTNITVCAFHYESQNST) are extracellular. R167 is a binding site for angiotensin II. N176 is a glycosylation site (N-linked (GlcNAc...) asparagine). Angiotensin II contacts are provided by F182, H183, and Y184. An N-linked (GlcNAc...) asparagine glycan is attached at N188. The chain crosses the membrane as a helical span at residues 191–216 (LPIGLGLTKNILGFLFPFLIILTSYT). K199 is an angiotensin II binding site. Residues 217-239 (LIWKALKKAYEIQKNKPRNDDIF) lie on the Cytoplasmic side of the membrane. The chain crosses the membrane as a helical span at residues 240–268 (KIIMAIVLFFFFSWIPHQIFTFLDVLIQL). Topologically, residues 269 to 278 (GIIRDCRIAD) are extracellular. The helical transmembrane segment at 279 to 304 (IVDTAMPITICIAYFNNCLNPLFYGF) threads the bilayer. At 305-359 (LGKKFKKYFLQLLKYIPPKAKSHSNLSTKMSTLSYRPSDNVSSSTKKPAPCFEVE) the chain is on the cytoplasmic side. The span at 335-350 (STLSYRPSDNVSSSTK) shows a compositional bias: polar residues. A disordered region spans residues 335 to 359 (STLSYRPSDNVSSSTKKPAPCFEVE). C355 carries the S-palmitoyl cysteine lipid modification.

This sequence belongs to the G-protein coupled receptor 1 family. Interacts with MAS1. Interacts with ARRB1. Interacts with FLNA (via filamin repeat 21); increases PKA-mediated phosphorylation of FLNA. Post-translationally, C-terminal Ser or Thr residues may be phosphorylated.

The protein localises to the cell membrane. Functionally, receptor for angiotensin II, a vasoconstricting peptide, which acts as a key regulator of blood pressure and sodium retention by the kidney. The activated receptor in turn couples to G-alpha proteins G(q) (GNAQ, GNA11, GNA14 or GNA15) and thus activates phospholipase C and increases the cytosolic Ca(2+) concentrations, which in turn triggers cellular responses such as stimulation of protein kinase C. This chain is Type-1 angiotensin II receptor (AGTR1), found in Pan troglodytes (Chimpanzee).